The chain runs to 335 residues: Glyceraldehyde-3-phosphate dehydrogenase (335 aa).

NAD(+) contacts are provided by residues 10 to 11, D33, K77, and T119; that span reads RI. Residues 150-152, T181, 210-211, and R233 contribute to the D-glyceraldehyde 3-phosphate site; these read SCT and TG. C151 (nucleophile) is an active-site residue. N315 is a binding site for NAD(+).

The protein belongs to the glyceraldehyde-3-phosphate dehydrogenase family. Homotetramer.

It is found in the cytoplasm. It catalyses the reaction D-glyceraldehyde 3-phosphate + phosphate + NAD(+) = (2R)-3-phospho-glyceroyl phosphate + NADH + H(+). It participates in carbohydrate degradation; glycolysis; pyruvate from D-glyceraldehyde 3-phosphate: step 1/5. Functionally, catalyzes the oxidative phosphorylation of glyceraldehyde 3-phosphate (G3P) to 1,3-bisphosphoglycerate (BPG) using the cofactor NAD. The first reaction step involves the formation of a hemiacetal intermediate between G3P and a cysteine residue, and this hemiacetal intermediate is then oxidized to a thioester, with concomitant reduction of NAD to NADH. The reduced NADH is then exchanged with the second NAD, and the thioester is attacked by a nucleophilic inorganic phosphate to produce BPG. The polypeptide is Glyceraldehyde-3-phosphate dehydrogenase (gap) (Chlamydia muridarum (strain MoPn / Nigg)).